Consider the following 117-residue polypeptide: Immunoglobulin kappa variable 1D-17 (117 aa).

Residues 1 to 22 (MDMRVPAQLLGLLLLWFPGARC) form the signal peptide. Residues 23-45 (NIQMTQSPSAMSASVGDRVTITC) form a framework-1 region. The region spanning 23–117 (NIQMTQSPSA…YYCLQHNSYP (95 aa)) is the Ig-like domain. Cys-45 and Cys-110 are joined by a disulfide. Positions 46-56 (RARQGISNYLA) are complementarity-determining-1. The framework-2 stretch occupies residues 57-71 (WFQQKPGKVPKHLIY). The segment at 72 to 78 (AASSLQS) is complementarity-determining-2. The tract at residues 79-110 (GVPSRFSGSGSGTEFTLTISSLQPEDFATYYC) is framework-3. Positions 111–117 (LQHNSYP) are complementarity-determining-3.

Immunoglobulins are composed of two identical heavy chains and two identical light chains; disulfide-linked.

The protein resides in the secreted. It is found in the cell membrane. V region of the variable domain of immunoglobulin light chains that participates in the antigen recognition. Immunoglobulins, also known as antibodies, are membrane-bound or secreted glycoproteins produced by B lymphocytes. In the recognition phase of humoral immunity, the membrane-bound immunoglobulins serve as receptors which, upon binding of a specific antigen, trigger the clonal expansion and differentiation of B lymphocytes into immunoglobulins-secreting plasma cells. Secreted immunoglobulins mediate the effector phase of humoral immunity, which results in the elimination of bound antigens. The antigen binding site is formed by the variable domain of one heavy chain, together with that of its associated light chain. Thus, each immunoglobulin has two antigen binding sites with remarkable affinity for a particular antigen. The variable domains are assembled by a process called V-(D)-J rearrangement and can then be subjected to somatic hypermutations which, after exposure to antigen and selection, allow affinity maturation for a particular antigen. The sequence is that of Immunoglobulin kappa variable 1D-17 from Homo sapiens (Human).